The sequence spans 140 residues: Cystatin-C (140 aa).

The signal sequence occupies residues 1-20 (MASPLRSLMLLLAVLAVAWA). The Secondary area of contact signature appears at 75–79 (QLVAG). 2 cysteine pairs are disulfide-bonded: Cys-93/Cys-103 and Cys-117/Cys-137. A glycan (N-linked (GlcNAc...) asparagine) is linked at Asn-99.

The protein belongs to the cystatin family.

Its subcellular location is the secreted. Its function is as follows. As an inhibitor of cysteine proteinases, this protein is thought to serve an important physiological role as a local regulator of this enzyme activity. Known to inhibit cathepsin B, H, and L. The sequence is that of Cystatin-C (Cst3) from Rattus norvegicus (Rat).